Reading from the N-terminus, the 114-residue chain is Fluoride-specific ion channel FluC 1 (114 aa).

The next 3 membrane-spanning stretches (helical) occupy residues 23 to 43 (ATLTINLLGSFLLAWLTSYVF), 52 to 72 (LSTAIGTGFVGSFTTFSTLSV), and 84 to 104 (FLAMVYVLVSLLGGLTMSHLG). Gly-62 and Thr-65 together coordinate Na(+).

It belongs to the fluoride channel Fluc/FEX (TC 1.A.43) family.

The protein localises to the cell membrane. The enzyme catalyses fluoride(in) = fluoride(out). With respect to regulation, na(+) is not transported, but it plays an essential structural role and its presence is essential for fluoride channel function. In terms of biological role, fluoride-specific ion channel. Important for reducing fluoride concentration in the cell, thus reducing its toxicity. The chain is Fluoride-specific ion channel FluC 1 from Desulfitobacterium hafniense (strain Y51).